We begin with the raw amino-acid sequence, 790 residues long: Probable E3 ubiquitin-protein ligase MARCHF10 (790 aa).

The tract at residues 33–240 (LKRQEHKKEP…PQNEPHTALS (208 aa)) is disordered. Residues 34–48 (KRQEHKKEPNEKKQE) show a composition bias toward basic and acidic residues. Low complexity predominate over residues 61–70 (FSSGSSCKQS). Serine 78 bears the Phosphoserine mark. Residues 218–227 (PLERQKKGDP) show a composition bias toward basic and acidic residues. Polar residues predominate over residues 230–240 (RPQNEPHTALS). Positions 284–308 (LSLNNEQENYDTEEETRTEEELLLA) form a coiled coil. Disordered regions lie at residues 323–416 (GTSA…EDVS) and 507–569 (LSPI…RHLQ). Composition is skewed to polar residues over residues 355–370 (RKTS…SSPG), 406–416 (GVTQVSAEDVS), and 511–520 (RNRNPSAASE). The span at 521 to 533 (SHSEDTQGEEERA) shows a compositional bias: basic and acidic residues. Positions 534–563 (STSQAQESPLLSDLPNPQSSMALGDSPSSP) are enriched in polar residues. An RING-CH-type zinc finger spans residues 633–703 (DSEEEGDLCR…EMCKQGLLVD (71 aa)). 8 residues coordinate Zn(2+): cysteine 641, cysteine 644, cysteine 659, cysteine 661, histidine 669, cysteine 672, cysteine 693, and cysteine 696. The disordered stretch occupies residues 757–790 (ERMSRNYPQPRPEESESSESGDGNESNVYPGRVI). The segment covering 774–783 (SESGDGNESN) has biased composition (low complexity).

It catalyses the reaction S-ubiquitinyl-[E2 ubiquitin-conjugating enzyme]-L-cysteine + [acceptor protein]-L-lysine = [E2 ubiquitin-conjugating enzyme]-L-cysteine + N(6)-ubiquitinyl-[acceptor protein]-L-lysine.. Its pathway is protein modification; protein ubiquitination. Functionally, E3 ubiquitin-protein ligase. E3 ubiquitin ligases accept ubiquitin from an E2 ubiquitin-conjugating enzyme in the form of a thioester and then directly transfer the ubiquitin to targeted substrates. This chain is Probable E3 ubiquitin-protein ligase MARCHF10 (Marchf10), found in Rattus norvegicus (Rat).